The sequence spans 119 residues: Large ribosomal subunit protein bL19 (119 aa).

Belongs to the bacterial ribosomal protein bL19 family.

Its function is as follows. This protein is located at the 30S-50S ribosomal subunit interface and may play a role in the structure and function of the aminoacyl-tRNA binding site. The sequence is that of Large ribosomal subunit protein bL19 from Limosilactobacillus fermentum (strain NBRC 3956 / LMG 18251) (Lactobacillus fermentum).